A 244-amino-acid chain; its full sequence is Na(+)-translocating NADH-quinone reductase subunit E (244 aa).

A run of 6 helical transmembrane segments spans residues 11-31 (LLGI…TFLG), 50-70 (MSVA…HYFI), 90-110 (FLEL…LELL), 123-143 (GIFL…LFGI), 153-173 (VVFS…FATI), and 191-211 (ISFI…GIDI).

This sequence belongs to the NqrDE/RnfAE family. In terms of assembly, composed of six subunits; NqrA, NqrB, NqrC, NqrD, NqrE and NqrF.

It localises to the cell inner membrane. The enzyme catalyses a ubiquinone + n Na(+)(in) + NADH + H(+) = a ubiquinol + n Na(+)(out) + NAD(+). Its function is as follows. NQR complex catalyzes the reduction of ubiquinone-1 to ubiquinol by two successive reactions, coupled with the transport of Na(+) ions from the cytoplasm to the periplasm. NqrA to NqrE are probably involved in the second step, the conversion of ubisemiquinone to ubiquinol. The chain is Na(+)-translocating NADH-quinone reductase subunit E from Chlamydia trachomatis serovar L2 (strain ATCC VR-902B / DSM 19102 / 434/Bu).